We begin with the raw amino-acid sequence, 208 residues long: Uracil phosphoribosyltransferase (208 aa).

5-phospho-alpha-D-ribose 1-diphosphate is bound by residues Arg-78, Arg-103, and Asp-130 to Ser-138. Uracil-binding positions include Ile-193 and Gly-198–Ala-200. A 5-phospho-alpha-D-ribose 1-diphosphate-binding site is contributed by Asp-199.

The protein belongs to the UPRTase family. Mg(2+) is required as a cofactor.

It catalyses the reaction UMP + diphosphate = 5-phospho-alpha-D-ribose 1-diphosphate + uracil. The protein operates within pyrimidine metabolism; UMP biosynthesis via salvage pathway; UMP from uracil: step 1/1. Allosterically activated by GTP. Catalyzes the conversion of uracil and 5-phospho-alpha-D-ribose 1-diphosphate (PRPP) to UMP and diphosphate. The protein is Uracil phosphoribosyltransferase of Pectobacterium atrosepticum (strain SCRI 1043 / ATCC BAA-672) (Erwinia carotovora subsp. atroseptica).